The chain runs to 316 residues: Ribose-phosphate pyrophosphokinase (316 aa).

ATP-binding positions include 37–39 (DGE) and 96–97 (RQ). Positions 130 and 171 each coordinate Mg(2+). The active site involves K194. R196 and D221 together coordinate D-ribose 5-phosphate.

The protein belongs to the ribose-phosphate pyrophosphokinase family. Class I subfamily. As to quaternary structure, homohexamer. Requires Mg(2+) as cofactor.

The protein resides in the cytoplasm. The catalysed reaction is D-ribose 5-phosphate + ATP = 5-phospho-alpha-D-ribose 1-diphosphate + AMP + H(+). The protein operates within metabolic intermediate biosynthesis; 5-phospho-alpha-D-ribose 1-diphosphate biosynthesis; 5-phospho-alpha-D-ribose 1-diphosphate from D-ribose 5-phosphate (route I): step 1/1. Involved in the biosynthesis of the central metabolite phospho-alpha-D-ribosyl-1-pyrophosphate (PRPP) via the transfer of pyrophosphoryl group from ATP to 1-hydroxyl of ribose-5-phosphate (Rib-5-P). This Rhodopirellula baltica (strain DSM 10527 / NCIMB 13988 / SH1) protein is Ribose-phosphate pyrophosphokinase.